Consider the following 311-residue polypeptide: MSDKDSINRRNVLRKIGGIGVASAVGFSGLASGESLSDDEKQDVIDTIYKSQRVEQIKKKFGGVNIEPKKVQSVTTNQSGDLVTAKLSVSDGDLVYSSVKDTTVIVQFDRSASEIGESWPKNTEAFIKSTSSGVDLLRTATDEEIKDVTEGVNTSEIESADAVNIFIDPESQTYYMEKYDFNNKVLEMFELATGGTSSGKISPTREDQNHEYNVREHKVFNSEKQNIQLQSDCNINSNTAADVILCFNQVGSCALCSPTLVGGPVPTVACLLVVCFGTPNAVSAILEEVDNSCFNLIKDVISCWDEWTSFW.

Propeptides lie at residues Met1–Gln230 and Thr267–Trp311.

It localises to the secreted. In terms of biological role, has antibacterial activity against the haloarchaeons H.salinarium NRC817, Halobacterium GRB and H.gibbonsii. The polypeptide is Halocin-S8 (halS8) (Haloarchaeon S8a).